Here is a 292-residue protein sequence, read N- to C-terminus: Probable 2-(5''-triphosphoribosyl)-3'-dephosphocoenzyme-A synthase (292 aa).

It belongs to the CitG/MdcB family.

It catalyses the reaction 3'-dephospho-CoA + ATP = 2'-(5''-triphospho-alpha-D-ribosyl)-3'-dephospho-CoA + adenine. The protein is Probable 2-(5''-triphosphoribosyl)-3'-dephosphocoenzyme-A synthase of Shigella boydii serotype 18 (strain CDC 3083-94 / BS512).